A 205-amino-acid polypeptide reads, in one-letter code: Dephospho-CoA kinase (205 aa).

In terms of domain architecture, DPCK spans 15–205 (VIGLTGGIAT…VERALDQASI (191 aa)). ATP is bound at residue 23 to 28 (ATGKST).

Belongs to the CoaE family.

The protein localises to the cytoplasm. The enzyme catalyses 3'-dephospho-CoA + ATP = ADP + CoA + H(+). The protein operates within cofactor biosynthesis; coenzyme A biosynthesis; CoA from (R)-pantothenate: step 5/5. Functionally, catalyzes the phosphorylation of the 3'-hydroxyl group of dephosphocoenzyme A to form coenzyme A. This Gloeobacter violaceus (strain ATCC 29082 / PCC 7421) protein is Dephospho-CoA kinase.